A 155-amino-acid chain; its full sequence is Large ribosomal subunit protein eL24 (155 aa).

Basic and acidic residues predominate over residues 97-129; sequence KPEIRKAKRDEKAKADKEKKKADKAARKADKAK. Residues 97–155 form a disordered region; the sequence is KPEIRKAKRDEKAKADKEKKKADKAARKADKAKSAATQASKISKQQAKGAFQKVAATSR. Polar residues predominate over residues 133-142; that stretch reads TQASKISKQQ.

It belongs to the eukaryotic ribosomal protein eL24 family.

This is Large ribosomal subunit protein eL24 (RPL24) from Eremothecium gossypii (strain ATCC 10895 / CBS 109.51 / FGSC 9923 / NRRL Y-1056) (Yeast).